We begin with the raw amino-acid sequence, 137 residues long: Large ribosomal subunit protein uL16c (137 aa).

It belongs to the universal ribosomal protein uL16 family. In terms of assembly, part of the 50S ribosomal subunit.

It is found in the plastid. The chain is Large ribosomal subunit protein uL16c from Cuscuta exaltata (Tall dodder).